Consider the following 246-residue polypeptide: MSKRTIQLNCDMGESFGVWTMGADEEVMPWIDMANIACGFHASDPHVMSRTIDLALEHEVMIGAHPSYPDLQGFGRRSLAMNEQEVSEIILYQVGALKALCESKNGQLSYVKPHGALYNDMMSDPSIFRAVVDAVSCFNLPLMVLASANNQDYLDIADRFDVPLLFEAFADRTYLANGKLTPRSQPNAVLSSEEAILNQVRQIARYGKVTSSDGFVIPIEADTLCVHGDNPNAVSLIARIRAALDE.

The protein belongs to the LamB/PxpA family. In terms of assembly, forms a complex composed of PxpA, PxpB and PxpC.

The catalysed reaction is 5-oxo-L-proline + ATP + 2 H2O = L-glutamate + ADP + phosphate + H(+). Functionally, catalyzes the cleavage of 5-oxoproline to form L-glutamate coupled to the hydrolysis of ATP to ADP and inorganic phosphate. In Vibrio cholerae serotype O1 (strain M66-2), this protein is 5-oxoprolinase subunit A.